The chain runs to 123 residues: uncharacterized protein (123 aa).

The first 20 residues, 1–20, serve as a signal peptide directing secretion; the sequence is MSPLIVGTLIIILLSGLATA. A lipid anchor (GPI-anchor amidated glycine) is attached at Gly96. Positions 97 to 123 are cleaved as a propeptide — removed in mature form; that stretch reads SSPTTKRVIYIVMILLVLITLAVNLKH.

Its subcellular location is the cell membrane. This is an uncharacterized protein from Schizosaccharomyces pombe (strain 972 / ATCC 24843) (Fission yeast).